We begin with the raw amino-acid sequence, 344 residues long: Methionine aminopeptidase 1C, chloroplastic/mitochondrial (344 aa).

His-172 lines the substrate pocket. A divalent metal cation-binding residues include Asp-189, Asp-200, and His-262. Substrate is bound at residue His-269. A divalent metal cation is bound by residues Glu-296 and Glu-327.

Belongs to the peptidase M24A family. Methionine aminopeptidase type 1 subfamily. It depends on Co(2+) as a cofactor. Zn(2+) is required as a cofactor. Requires Mn(2+) as cofactor. The cofactor is Fe(2+). Ubiquitous.

The protein resides in the plastid. It localises to the chloroplast. The protein localises to the mitochondrion. It carries out the reaction Release of N-terminal amino acids, preferentially methionine, from peptides and arylamides.. Its function is as follows. Removes the N-terminal methionine from nascent proteins. The N-terminal methionine is often cleaved when the second residue in the primary sequence is small and uncharged (Met-Ala-, Cys, Gly, Pro, Ser, Thr, or Val). This Arabidopsis thaliana (Mouse-ear cress) protein is Methionine aminopeptidase 1C, chloroplastic/mitochondrial (MAP1C).